The sequence spans 294 residues: Phenylalanine-4-hydroxylase (294 aa).

Residues 1–20 (MSGDGLSNGPPPGARPDWTI) form a disordered region. Positions 129, 134, and 175 each coordinate Fe cation.

Belongs to the biopterin-dependent aromatic amino acid hydroxylase family. Fe(2+) serves as cofactor.

It catalyses the reaction (6R)-L-erythro-5,6,7,8-tetrahydrobiopterin + L-phenylalanine + O2 = (4aS,6R)-4a-hydroxy-L-erythro-5,6,7,8-tetrahydrobiopterin + L-tyrosine. The protein operates within amino-acid degradation; L-phenylalanine degradation; acetoacetate and fumarate from L-phenylalanine: step 1/6. The polypeptide is Phenylalanine-4-hydroxylase (phhA) (Caulobacter vibrioides (strain ATCC 19089 / CIP 103742 / CB 15) (Caulobacter crescentus)).